Consider the following 527-residue polypeptide: Phosphoethanolamine transferase OpgE (527 aa).

The Periplasmic portion of the chain corresponds to 1–33 (MNLTLKESLVTRSRVFSPWTAFYFLQSLLINLG). The chain crosses the membrane as a helical span at residues 34 to 54 (LGYPFSLLYTAAFTAILLLLW). Topologically, residues 55–62 (RTLPRVQK) are cytoplasmic. A helical membrane pass occupies residues 63–83 (VLVGVSSLVAACYFPFAQAYG). The Periplasmic segment spans residues 84 to 106 (APNFNTLLALHSTNMEESTEILT). A helical membrane pass occupies residues 107–127 (IFPWYSYLVGLFIFALGVIAI). At 128–146 (RRKKENEKARWNTFDSLCL) the chain is on the cytoplasmic side. Residues 147–167 (VFSVATFFVAPVQNLAWGGVF) form a helical membrane-spanning segment. Residues 168 to 527 (KLKDTGYPVF…LGTDIFDPKP (360 aa)) are Periplasmic-facing.

Belongs to the phosphoethanolamine transferase family.

It is found in the cell inner membrane. Its pathway is glycan metabolism; osmoregulated periplasmic glucan (OPG) biosynthesis. Its function is as follows. Catalyzes the addition of a phosphoethanolamine moiety to the osmoregulated periplasmic glucan (OPG) backbone. This Escherichia coli (strain K12) protein is Phosphoethanolamine transferase OpgE (opgE).